Consider the following 433-residue polypeptide: CinA-like protein (433 aa).

This sequence belongs to the CinA family.

This Prochlorococcus marinus (strain MIT 9515) protein is CinA-like protein.